Consider the following 250-residue polypeptide: MKVSVISLFPEMFQAITQYGVTGRAIKSGLVEVDFFNPRDFTHDRHKTVDDRPYGGGPGMLMKVQPLKDAIASAKLSVPNAKVIYLSPQGRTLTQEGVQQLAKQAEFILVAGRYEGVDERLIQSEIDEEWSIGDFVLSGGELPAMVLMDAVSRMVPGVLGKQASADEDSFSDGLLDCPHYTRPEVLNGEPVPSVLLSGNHEEIRRWRLKQKLARTFQRRPDLLQNLELDKEQQLLLEEFIRETEDSTSAE.

S-adenosyl-L-methionine is bound by residues glycine 112 and 132–137; that span reads IGDFVL.

The protein belongs to the RNA methyltransferase TrmD family. As to quaternary structure, homodimer.

It localises to the cytoplasm. It carries out the reaction guanosine(37) in tRNA + S-adenosyl-L-methionine = N(1)-methylguanosine(37) in tRNA + S-adenosyl-L-homocysteine + H(+). Functionally, specifically methylates guanosine-37 in various tRNAs. The polypeptide is tRNA (guanine-N(1)-)-methyltransferase (Marinomonas sp. (strain MWYL1)).